The sequence spans 409 residues: Elongation factor Tu, chloroplastic (409 aa).

The 205-residue stretch at 10–214 folds into the tr-type G domain; the sequence is KPHINIGTIG…QVDSYIPTPT (205 aa). The G1 stretch occupies residues 19-26; that stretch reads GHVDHGKT. 19–26 lines the GTP pocket; it reads GHVDHGKT. Threonine 26 provides a ligand contact to Mg(2+). Residue lysine 57 is modified to N6-methyllysine. The tract at residues 60 to 64 is G2; it reads GITIN. A G3 region spans residues 81 to 84; sequence DCPG. Residues 81–85 and 136–139 each bind GTP; these read DCPGH and NKED. Residues 136 to 139 are G4; it reads NKED. The segment at 174 to 176 is G5; that stretch reads SAL.

Belongs to the TRAFAC class translation factor GTPase superfamily. Classic translation factor GTPase family. EF-Tu/EF-1A subfamily.

The protein resides in the plastid. It localises to the chloroplast. The catalysed reaction is GTP + H2O = GDP + phosphate + H(+). GTP hydrolase that promotes the GTP-dependent binding of aminoacyl-tRNA to the A-site of ribosomes during protein biosynthesis. This chain is Elongation factor Tu, chloroplastic (tufA), found in Euglena gracilis.